Reading from the N-terminus, the 473-residue chain is Glutamate--tRNA ligase (473 aa).

Positions 11–21 (PSPTGFLHIGG) match the 'HIGH' region motif. The 'KMSKS' region motif lies at 240 to 244 (KLSKR). K243 contributes to the ATP binding site.

This sequence belongs to the class-I aminoacyl-tRNA synthetase family. Glutamate--tRNA ligase type 1 subfamily. As to quaternary structure, monomer.

The protein localises to the cytoplasm. It carries out the reaction tRNA(Glu) + L-glutamate + ATP = L-glutamyl-tRNA(Glu) + AMP + diphosphate. Catalyzes the attachment of glutamate to tRNA(Glu) in a two-step reaction: glutamate is first activated by ATP to form Glu-AMP and then transferred to the acceptor end of tRNA(Glu). This chain is Glutamate--tRNA ligase, found in Rhodopseudomonas palustris (strain TIE-1).